A 209-amino-acid polypeptide reads, in one-letter code: 3-hexulose-6-phosphate synthase (209 aa).

The protein belongs to the HPS/KGPDC family. HPS subfamily. In terms of assembly, homodimer.

It catalyses the reaction D-ribulose 5-phosphate + formaldehyde = D-arabino-hex-3-ulose 6-phosphate. The protein operates within one-carbon metabolism; formaldehyde assimilation via RuMP pathway; D-fructose 6-phosphate from D-ribulose 5-phosphate and formaldehyde: step 1/2. In terms of biological role, catalyzes the condensation of ribulose 5-phosphate with formaldehyde to form 3-hexulose 6-phosphate. This Methylomonas aminofaciens protein is 3-hexulose-6-phosphate synthase (rmpA).